A 392-amino-acid chain; its full sequence is DNA replication and repair protein RecF (392 aa).

30-37 provides a ligand contact to ATP; it reads GPNAAGKT.

Belongs to the RecF family.

Its subcellular location is the cytoplasm. In terms of biological role, the RecF protein is involved in DNA metabolism; it is required for DNA replication and normal SOS inducibility. RecF binds preferentially to single-stranded, linear DNA. It also seems to bind ATP. The chain is DNA replication and repair protein RecF from Chloroflexus aurantiacus (strain ATCC 29364 / DSM 637 / Y-400-fl).